We begin with the raw amino-acid sequence, 63 residues long: Kappa-theraphotoxin-Cg3a 1 (63 aa).

The first 21 residues, 1–21, serve as a signal peptide directing secretion; the sequence is MKNTSILFILGLALLLVLAFE. Positions 22–29 are excised as a propeptide; that stretch reads VQVGESDG. Intrachain disulfides connect cysteine 31/cysteine 46, cysteine 38/cysteine 51, and cysteine 45/cysteine 58.

The protein belongs to the neurotoxin 10 (Hwtx-1) family. 44 (Jztx-4) subfamily. Expressed by the venom gland.

It localises to the secreted. Gating modifier of Kv2.1/KCNB1, Kv2.2/KCNB2 and Kv4.3/KCND3 channels. This is Kappa-theraphotoxin-Cg3a 1 from Chilobrachys guangxiensis (Chinese earth tiger tarantula).